The primary structure comprises 235 residues: Protein Thf1 (235 aa).

Positions 183 to 204 (DKLNKDLELYRSNLDKMAQALV) form a coiled coil. The interval 213 to 235 (DRKKREQRKQQSTAPVAPPSSNE) is disordered. Positions 222–235 (QQSTAPVAPPSSNE) are enriched in polar residues.

The protein belongs to the THF1 family.

Its function is as follows. May be involved in photosynthetic membrane biogenesis. The sequence is that of Protein Thf1 from Nostoc punctiforme (strain ATCC 29133 / PCC 73102).